The following is a 131-amino-acid chain: Small ribosomal subunit protein uS11 (131 aa).

It belongs to the universal ribosomal protein uS11 family. In terms of assembly, part of the 30S ribosomal subunit. Interacts with proteins S7 and S18. Binds to IF-3.

In terms of biological role, located on the platform of the 30S subunit, it bridges several disparate RNA helices of the 16S rRNA. Forms part of the Shine-Dalgarno cleft in the 70S ribosome. The polypeptide is Small ribosomal subunit protein uS11 (Buchnera aphidicola subsp. Acyrthosiphon pisum (strain 5A)).